The following is a 263-amino-acid chain: Endonuclease 8 (263 aa).

Pro-2 acts as the Schiff-base intermediate with DNA in catalysis. Residue Glu-3 is the Proton donor of the active site. Lys-53 functions as the Proton donor; for beta-elimination activity in the catalytic mechanism. Residues Gln-70, Arg-125, and Asn-169 each coordinate DNA. The FPG-type zinc finger occupies 229-263 (KVFHREGESCERCGGTIERTMLSSRPFYWCPHCQS). Catalysis depends on Arg-253, which acts as the Proton donor; for delta-elimination activity.

It belongs to the FPG family. The cofactor is Zn(2+).

It catalyses the reaction 2'-deoxyribonucleotide-(2'-deoxyribose 5'-phosphate)-2'-deoxyribonucleotide-DNA = a 3'-end 2'-deoxyribonucleotide-(2,3-dehydro-2,3-deoxyribose 5'-phosphate)-DNA + a 5'-end 5'-phospho-2'-deoxyribonucleoside-DNA + H(+). Involved in base excision repair of DNA damaged by oxidation or by mutagenic agents. Acts as a DNA glycosylase that recognizes and removes damaged bases. Has a preference for oxidized pyrimidines, such as thymine glycol, 5,6-dihydrouracil and 5,6-dihydrothymine. Has AP (apurinic/apyrimidinic) lyase activity and introduces nicks in the DNA strand. Cleaves the DNA backbone by beta-delta elimination to generate a single-strand break at the site of the removed base with both 3'- and 5'-phosphates. This Pectobacterium atrosepticum (strain SCRI 1043 / ATCC BAA-672) (Erwinia carotovora subsp. atroseptica) protein is Endonuclease 8.